Consider the following 370-residue polypeptide: CST complex subunit STN1 (370 aa).

The interaction with CTC1 stretch occupies residues 1 to 187 (MESNSSQCED…KVYDQPFHSP (187 aa)). Residues 57–157 (VDILGTVIGV…EIHATTYYKV (101 aa)) constitute a DNA-binding region (OB). Winged helix-turn-helix (wHTH) regions lie at residues 193–297 (EALS…YVTR) and 298–370 (EDKE…YTAF).

This sequence belongs to the STN1 family. Component of the CST complex, composed of TEN1/C17orf106, CTC1/C17orf68 and STN1; in the complex interacts directly with TEN1 and CTC1. Interacts with ACD/TPP1, POT1 and POLA1.

The protein resides in the nucleus. It localises to the chromosome. The protein localises to the telomere. Component of the CST complex proposed to act as a specialized replication factor promoting DNA replication under conditions of replication stress or natural replication barriers such as the telomere duplex. The CST complex binds single-stranded DNA with high affinity in a sequence-independent manner, while isolated subunits bind DNA with low affinity by themselves. Initially the CST complex has been proposed to protect telomeres from DNA degradation. However, the CST complex has been shown to be involved in several aspects of telomere replication. The CST complex inhibits telomerase and is involved in telomere length homeostasis; it is proposed to bind to newly telomerase-synthesized 3' overhangs and to terminate telomerase action implicating the association with the ACD:POT1 complex thus interfering with its telomerase stimulation activity. The CST complex is also proposed to be involved in fill-in synthesis of the telomeric C-strand probably implicating recruitment and activation of DNA polymerase alpha. The CST complex facilitates recovery from many forms of exogenous DNA damage; seems to be involved in the re-initiation of DNA replication at repaired forks and/or dormant origins. Required for efficicient replication of the duplex region of the telomere. Promotes efficient replication of lagging-strand telomeres. Promotes general replication start following replication-fork stalling implicating new origin firing. May be in involved in C-strand fill-in during late S/G2 phase independent of its role in telomere duplex replication. This Bos taurus (Bovine) protein is CST complex subunit STN1.